Reading from the N-terminus, the 632-residue chain is Probable electron transfer flavoprotein-ubiquinone oxidoreductase, mitochondrial (632 aa).

93–107 (VCIVGAGPAGLSAAI) contacts FAD. [4Fe-4S] cluster-binding residues include cysteine 575, cysteine 601, cysteine 604, and cysteine 607. In terms of domain architecture, 4Fe-4S ferredoxin-type spans 592-621 (KRFVINSQNCVHCKTCDIKDPLQGIQWKTP).

The protein belongs to the ETF-QO/FixC family. Requires [4Fe-4S] cluster as cofactor. FAD is required as a cofactor.

The protein localises to the mitochondrion inner membrane. It carries out the reaction a ubiquinone + reduced [electron-transfer flavoprotein] = a ubiquinol + oxidized [electron-transfer flavoprotein] + H(+). Accepts electrons from ETF and reduces ubiquinone. The sequence is that of Probable electron transfer flavoprotein-ubiquinone oxidoreductase, mitochondrial from Schizosaccharomyces pombe (strain 972 / ATCC 24843) (Fission yeast).